Here is a 1639-residue protein sequence, read N- to C-terminus: Protein GFS12 (1639 aa).

Residues 206–294 (LEEKSKLRCL…IRPSNILLSD (89 aa)) form the Protein kinase 1 domain. A BEACH domain is found at 336-608 (LKISSHLDWQ…FHGFGVDNKR (273 aa)). Residues 715 to 788 (IAGDIFSIGC…AKSLLDSPYF (74 aa)) form the Protein kinase 2 domain. WD repeat units lie at residues 1290–1333 (AHHG…CVSS) and 1336–1373 (AHEE…LISL). A compositionally biased stretch (low complexity) spans 1377–1398 (SPSDQDQASSDPSSKNNSNPCN). The tract at residues 1377 to 1399 (SPSDQDQASSDPSSKNNSNPCNR) is disordered. WD repeat units follow at residues 1465 to 1499 (ALCS…RLFD), 1511 to 1549 (AHDG…TPQP), and 1609 to 1639 (RVKS…RICC).

It belongs to the protein kinase superfamily. Tyr protein kinase family. Interacts (via protein kinase 2 domain) with BCHC1 (via PH-BEACH domain). In terms of tissue distribution, weakly expressed in the cotyledons of germinating seedlings. Restricted to the vascular tissues of cotyledons. Detected in root tips, apical meristem, young flower buds and receptacles.

In terms of biological role, may act predominantly to suppress BCHC1, which itself is a negative factor in protein storage vacuole (PSV) trafficking regulation and plant effector triggered immunity (ETI). Required for ETI, but not for cell death. This chain is Protein GFS12, found in Arabidopsis thaliana (Mouse-ear cress).